The chain runs to 332 residues: Lipoyl synthase (332 aa).

Residues Cys74, Cys79, Cys85, Cys100, Cys104, Cys107, and Ser314 each coordinate [4Fe-4S] cluster. The Radical SAM core domain occupies 85 to 303 (CFGKGTATFM…EQEAYRMGFS (219 aa)).

The protein belongs to the radical SAM superfamily. Lipoyl synthase family. [4Fe-4S] cluster serves as cofactor.

It localises to the cytoplasm. It catalyses the reaction [[Fe-S] cluster scaffold protein carrying a second [4Fe-4S](2+) cluster] + N(6)-octanoyl-L-lysyl-[protein] + 2 oxidized [2Fe-2S]-[ferredoxin] + 2 S-adenosyl-L-methionine + 4 H(+) = [[Fe-S] cluster scaffold protein] + N(6)-[(R)-dihydrolipoyl]-L-lysyl-[protein] + 4 Fe(3+) + 2 hydrogen sulfide + 2 5'-deoxyadenosine + 2 L-methionine + 2 reduced [2Fe-2S]-[ferredoxin]. It participates in protein modification; protein lipoylation via endogenous pathway; protein N(6)-(lipoyl)lysine from octanoyl-[acyl-carrier-protein]: step 2/2. Catalyzes the radical-mediated insertion of two sulfur atoms into the C-6 and C-8 positions of the octanoyl moiety bound to the lipoyl domains of lipoate-dependent enzymes, thereby converting the octanoylated domains into lipoylated derivatives. This Verminephrobacter eiseniae (strain EF01-2) protein is Lipoyl synthase.